A 742-amino-acid chain; its full sequence is MSVQEDGAARPEPDVLRRHDSLYGDAEKVSNNKRHGAGGSWARTLQLAFQSIGVVYGDVGTSPLYVYSSTFPNGIKHPDDLVGVLSLILYTLILIPMVKYVFIVLYANDNGDGGTFALYSLISRHAKIRMIPNDQTEDANVSNYSIEAPSSQLRRAEWVKQKLESSNAAKIALFTITILGTSMVMGDGTLTPAISVLSAVSGIREKAPNLTQSQVVWISVAILFVLFSMQRFGTDKVGYTFAPVISVWFLLIAGIGMYNLTVHEITILRAFNPKYIVDYFRRNGKEAWVSLGGVVLCITGTEAMFADLGHFNIRAIQLSFTCVLFPSVALCYMGQAAYLRKFPENVGDTFYRSIPAPLFWPVFVVAIMGAIIASQAMLSGAFAILSKALSLGCFPRVEVVHTSNKYEGQVYIPEVNFLIGAASVAVTLAFQTTANIGNAYGICVVTVFSITTHLMTVVMLLIWKVRLPFIAAFYAAFGLAEFLYLSSILSKFAEGGYLPFCFSLVLMALMATWHYVHVKRYWYELDRVVPAAETTALLARRDVRRVPGVGLLYSELVQGIPPVFPRLVDKIPSVHAVFVFMSIKHLPVPRVAPAERFIFRRVVGADAGAGHRLFRCVARYGYTDQLEGAKEFAAFLLDRLKVFVHEESVFACSRGDNDDDDAMRRAQAMAEEEKRVIDAEAERGVVYLMGEANVTAAAGSSVMKRIVVNYVYTLLRKNLREGHKALSVPKDQLLKVGITYEI.

The Cytoplasmic segment spans residues 1–46 (MSVQEDGAARPEPDVLRRHDSLYGDAEKVSNNKRHGAGGSWARTLQ). A helical transmembrane segment spans residues 47-67 (LAFQSIGVVYGDVGTSPLYVY). Over 68 to 83 (SSTFPNGIKHPDDLVG) the chain is Extracellular. Residues 84–104 (VLSLILYTLILIPMVKYVFIV) form a helical membrane-spanning segment. Residues 105-170 (LYANDNGDGG…QKLESSNAAK (66 aa)) lie on the Cytoplasmic side of the membrane. The helical transmembrane segment at 171–191 (IALFTITILGTSMVMGDGTLT) threads the bilayer. Topologically, residues 192–206 (PAISVLSAVSGIREK) are extracellular. Residues 207 to 227 (APNLTQSQVVWISVAILFVLF) traverse the membrane as a helical segment. The Cytoplasmic portion of the chain corresponds to 228 to 236 (SMQRFGTDK). The helical transmembrane segment at 237 to 257 (VGYTFAPVISVWFLLIAGIGM) threads the bilayer. Topologically, residues 258 to 287 (YNLTVHEITILRAFNPKYIVDYFRRNGKEA) are extracellular. A glycan (N-linked (GlcNAc...) asparagine) is linked at Asn259. Residues 288–308 (WVSLGGVVLCITGTEAMFADL) traverse the membrane as a helical segment. At 309–317 (GHFNIRAIQ) the chain is on the cytoplasmic side. Residues 318 to 338 (LSFTCVLFPSVALCYMGQAAY) form a helical membrane-spanning segment. Residues 339 to 352 (LRKFPENVGDTFYR) lie on the Extracellular side of the membrane. A helical transmembrane segment spans residues 353–373 (SIPAPLFWPVFVVAIMGAIIA). The Cytoplasmic portion of the chain corresponds to 374 to 409 (SQAMLSGAFAILSKALSLGCFPRVEVVHTSNKYEGQ). A helical transmembrane segment spans residues 410–430 (VYIPEVNFLIGAASVAVTLAF). Topologically, residues 431 to 441 (QTTANIGNAYG) are extracellular. The helical transmembrane segment at 442–462 (ICVVTVFSITTHLMTVVMLLI) threads the bilayer. Residues 463 to 468 (WKVRLP) lie on the Cytoplasmic side of the membrane. A helical membrane pass occupies residues 469-489 (FIAAFYAAFGLAEFLYLSSIL). The Extracellular segment spans residues 490–495 (SKFAEG). A helical membrane pass occupies residues 496–516 (GYLPFCFSLVLMALMATWHYV). The Cytoplasmic segment spans residues 517–742 (HVKRYWYELD…LLKVGITYEI (226 aa)).

Belongs to the HAK/KUP transporter (TC 2.A.72.3) family.

Its subcellular location is the membrane. Its function is as follows. High-affinity potassium transporter. This Oryza sativa subsp. japonica (Rice) protein is Potassium transporter 19 (HAK19).